The primary structure comprises 442 residues: UDP-glucosyltransferase 29 (442 aa).

Catalysis depends on His20, which acts as the Proton acceptor. An an anthocyanidin-binding site is contributed by His20. Asp116 acts as the Charge relay in catalysis. Residues Thr138, Ala318, Gln320, His335, Trp338, Ser340, Glu343, Asp359, and Gln360 each coordinate UDP-alpha-D-glucose.

Belongs to the UDP-glycosyltransferase family. As to expression, expressed at higher levels in roots than in leaves.

It carries out the reaction (20S)-ginsenoside F2 + UDP-alpha-D-glucose = (20S)-ginsenoside Rd + UDP + H(+). The catalysed reaction is (20S)-ginsenoside Rh2 + UDP-alpha-D-glucose = (20S)-ginsenoside Rg3 + UDP + H(+). It participates in secondary metabolite biosynthesis; terpenoid biosynthesis. Component of the dammarane-type triterpene saponins (e.g. PPD-type ginsenosides or panaxosides) biosynthetic pathway. Glycosyltransferase that catalyzes the conversion of ginsenoside Rh2 to ginsenoside Rg3. Triggers the biosynthesis of ginsenoside Rd from ginsenoside F2. The chain is UDP-glucosyltransferase 29 from Panax ginseng (Korean ginseng).